Consider the following 734-residue polypeptide: Methylcrotonoyl-CoA carboxylase subunit alpha, mitochondrial (734 aa).

Residues 1–25 (MSMMTVWALRRNVRRKNHSMLVRYI) constitute a mitochondrion transit peptide. Positions 37-484 (CIEKILVANR…ETHFIEHHKS (448 aa)) constitute a Biotin carboxylation domain. The ATP site is built by Lys152, Glu236, and His271. An ATP-grasp domain is found at 156–354 (KRIMGAAGVP…LVEWQIRVAN (199 aa)). 3 residues coordinate Mn(2+): Glu311, Glu325, and Asn327. Arg329 is an active-site residue. A Phosphoserine modification is found at Ser645. A disordered region spans residues 645–666 (SEDEEGVQHRTSSETSSHPPGT). The Biotinyl-binding domain occupies 657 to 733 (SETSSHPPGT…SDGSALFRIK (77 aa)). An N6-biotinyllysine modification is found at Lys699.

As to quaternary structure, probably a heterodimer composed of biotin-containing alpha subunits and beta subunits. Biotin is required as a cofactor. Mn(2+) serves as cofactor. In terms of tissue distribution, in roots, cotyledons, leaves, flowers, ovaries, siliques and embryos.

The protein localises to the mitochondrion matrix. It carries out the reaction 3-methylbut-2-enoyl-CoA + hydrogencarbonate + ATP = 3-methyl-(2E)-glutaconyl-CoA + ADP + phosphate + H(+). It functions in the pathway amino-acid degradation; L-leucine degradation; (S)-3-hydroxy-3-methylglutaryl-CoA from 3-isovaleryl-CoA: step 2/3. Biotin-attachment subunit of the 3-methylcrotonyl-CoA carboxylase, an enzyme that catalyzes the conversion of 3-methylcrotonyl-CoA to 3-methylglutaconyl-CoA, a critical step for leucine and isovaleric acid catabolism. The protein is Methylcrotonoyl-CoA carboxylase subunit alpha, mitochondrial (MCCA) of Arabidopsis thaliana (Mouse-ear cress).